A 489-amino-acid chain; its full sequence is Bifunctional protein HldE (489 aa).

The segment at 1–328 (METENIHSFD…ELKAQLQDQP (328 aa)) is ribokinase. 206 to 209 (NKKE) contributes to the ATP binding site. Residue D276 is part of the active site. The tract at residues 357–489 (LTNGCFDLLH…IIQDIRNGRG (133 aa)) is cytidylyltransferase.

This sequence in the N-terminal section; belongs to the carbohydrate kinase PfkB family. The protein in the C-terminal section; belongs to the cytidylyltransferase family. As to quaternary structure, homodimer.

It carries out the reaction D-glycero-beta-D-manno-heptose 7-phosphate + ATP = D-glycero-beta-D-manno-heptose 1,7-bisphosphate + ADP + H(+). The enzyme catalyses D-glycero-beta-D-manno-heptose 1-phosphate + ATP + H(+) = ADP-D-glycero-beta-D-manno-heptose + diphosphate. Its pathway is nucleotide-sugar biosynthesis; ADP-L-glycero-beta-D-manno-heptose biosynthesis; ADP-L-glycero-beta-D-manno-heptose from D-glycero-beta-D-manno-heptose 7-phosphate: step 1/4. The protein operates within nucleotide-sugar biosynthesis; ADP-L-glycero-beta-D-manno-heptose biosynthesis; ADP-L-glycero-beta-D-manno-heptose from D-glycero-beta-D-manno-heptose 7-phosphate: step 3/4. Functionally, catalyzes the phosphorylation of D-glycero-D-manno-heptose 7-phosphate at the C-1 position to selectively form D-glycero-beta-D-manno-heptose-1,7-bisphosphate. Its function is as follows. Catalyzes the ADP transfer from ATP to D-glycero-beta-D-manno-heptose 1-phosphate, yielding ADP-D-glycero-beta-D-manno-heptose. The polypeptide is Bifunctional protein HldE (Desulfatibacillum aliphaticivorans).